The chain runs to 162 residues: Phosphopantetheine adenylyltransferase (162 aa).

S11 contributes to the substrate binding site. Residues 11-12 (SF) and H19 contribute to the ATP site. Positions 43, 76, and 90 each coordinate substrate. ATP is bound by residues 91-93 (GLR), E101, and 126-132 (HLYISSS).

It belongs to the bacterial CoaD family. Homohexamer. Mg(2+) is required as a cofactor.

The protein resides in the cytoplasm. The catalysed reaction is (R)-4'-phosphopantetheine + ATP + H(+) = 3'-dephospho-CoA + diphosphate. Its pathway is cofactor biosynthesis; coenzyme A biosynthesis; CoA from (R)-pantothenate: step 4/5. Reversibly transfers an adenylyl group from ATP to 4'-phosphopantetheine, yielding dephospho-CoA (dPCoA) and pyrophosphate. The sequence is that of Phosphopantetheine adenylyltransferase from Streptococcus pneumoniae (strain Hungary19A-6).